Consider the following 444-residue polypeptide: Methylenetetrahydrofolate--tRNA-(uracil-5-)-methyltransferase TrmFO (444 aa).

10-15 (GAGLAG) contributes to the FAD binding site.

Belongs to the MnmG family. TrmFO subfamily. The cofactor is FAD.

The protein localises to the cytoplasm. The enzyme catalyses uridine(54) in tRNA + (6R)-5,10-methylene-5,6,7,8-tetrahydrofolate + NADH + H(+) = 5-methyluridine(54) in tRNA + (6S)-5,6,7,8-tetrahydrofolate + NAD(+). It carries out the reaction uridine(54) in tRNA + (6R)-5,10-methylene-5,6,7,8-tetrahydrofolate + NADPH + H(+) = 5-methyluridine(54) in tRNA + (6S)-5,6,7,8-tetrahydrofolate + NADP(+). Functionally, catalyzes the folate-dependent formation of 5-methyl-uridine at position 54 (M-5-U54) in all tRNAs. The protein is Methylenetetrahydrofolate--tRNA-(uracil-5-)-methyltransferase TrmFO of Streptococcus sanguinis (strain SK36).